A 427-amino-acid polypeptide reads, in one-letter code: Peptidase B (427 aa).

Mn(2+) is bound by residues K195 and D200. K207 is an active-site residue. The Mn(2+) site is built by D218, D277, and E279. Residue R281 is part of the active site.

The protein belongs to the peptidase M17 family. In terms of assembly, homohexamer. Requires Mn(2+) as cofactor.

It is found in the cytoplasm. It catalyses the reaction Release of an N-terminal amino acid, Xaa, from a peptide or arylamide. Xaa is preferably Glu or Asp but may be other amino acids, including Leu, Met, His, Cys and Gln.. Functionally, probably plays an important role in intracellular peptide degradation. This Salmonella dublin (strain CT_02021853) protein is Peptidase B.